Here is a 122-residue protein sequence, read N- to C-terminus: MRKKSSTPNRGFRVADQIQRDLTELIARELKDPRVGMVTIQAVEVTPDYAHAKVFFSVLVGDPKACEEALNQAAGFLRNGLFKRLMTHTVPTLHFHFDRTTERAADMNALIAKAVSSRAKDD.

It belongs to the RbfA family. As to quaternary structure, monomer. Binds 30S ribosomal subunits, but not 50S ribosomal subunits or 70S ribosomes.

The protein resides in the cytoplasm. Functionally, one of several proteins that assist in the late maturation steps of the functional core of the 30S ribosomal subunit. Associates with free 30S ribosomal subunits (but not with 30S subunits that are part of 70S ribosomes or polysomes). Required for efficient processing of 16S rRNA. May interact with the 5'-terminal helix region of 16S rRNA. The sequence is that of Ribosome-binding factor A from Polaromonas sp. (strain JS666 / ATCC BAA-500).